A 314-amino-acid chain; its full sequence is Ribosome maturation factor RimP (314 aa).

Disordered stretches follow at residues 1-20 (MDLDGKVQPPSAQVGQQPLS), 152-176 (PIEASSPIGGSKGALRLTRTDAKPE), and 206-314 (AAKA…PAPK). Over residues 10 to 19 (PSAQVGQQPL) the composition is skewed to polar residues. A compositionally biased stretch (acidic residues) spans 215-227 (DGNNEEQDEEQEE). Over residues 247-256 (PEHNPAQNPI) the composition is skewed to polar residues. 2 stretches are compositionally biased toward basic and acidic residues: residues 270-279 (TEFKKSKTGE) and 303-314 (SGHDMPRKPAPK).

Belongs to the RimP family.

The protein localises to the cytoplasm. Its function is as follows. Required for maturation of 30S ribosomal subunits. The sequence is that of Ribosome maturation factor RimP from Beijerinckia indica subsp. indica (strain ATCC 9039 / DSM 1715 / NCIMB 8712).